We begin with the raw amino-acid sequence, 130 residues long: Small ribosomal subunit protein uS11 (130 aa).

Belongs to the universal ribosomal protein uS11 family. As to quaternary structure, part of the 30S ribosomal subunit. Interacts with proteins S7 and S18. Binds to IF-3.

Functionally, located on the platform of the 30S subunit, it bridges several disparate RNA helices of the 16S rRNA. Forms part of the Shine-Dalgarno cleft in the 70S ribosome. This Borreliella afzelii (strain PKo) (Borrelia afzelii) protein is Small ribosomal subunit protein uS11.